The primary structure comprises 251 residues: Ubiquinone/menaquinone biosynthesis C-methyltransferase UbiE (251 aa).

S-adenosyl-L-methionine is bound by residues T74, D95, and 123–124 (NA).

This sequence belongs to the class I-like SAM-binding methyltransferase superfamily. MenG/UbiE family.

The catalysed reaction is a 2-demethylmenaquinol + S-adenosyl-L-methionine = a menaquinol + S-adenosyl-L-homocysteine + H(+). It carries out the reaction a 2-methoxy-6-(all-trans-polyprenyl)benzene-1,4-diol + S-adenosyl-L-methionine = a 5-methoxy-2-methyl-3-(all-trans-polyprenyl)benzene-1,4-diol + S-adenosyl-L-homocysteine + H(+). Its pathway is quinol/quinone metabolism; menaquinone biosynthesis; menaquinol from 1,4-dihydroxy-2-naphthoate: step 2/2. The protein operates within cofactor biosynthesis; ubiquinone biosynthesis. Its function is as follows. Methyltransferase required for the conversion of demethylmenaquinol (DMKH2) to menaquinol (MKH2) and the conversion of 2-polyprenyl-6-methoxy-1,4-benzoquinol (DDMQH2) to 2-polyprenyl-3-methyl-6-methoxy-1,4-benzoquinol (DMQH2). This is Ubiquinone/menaquinone biosynthesis C-methyltransferase UbiE from Shewanella sediminis (strain HAW-EB3).